Reading from the N-terminus, the 268-residue chain is MERYESLFARLKERKEGAFVPFVTLGDPGIEQSLKIIDALIEAGADALELGIPFSDPLADGPTIQNATLRAFAAGVTPAQCFEMLALIRQKHPTIPIGLLMYANLVFNKGIDEFYAQCEKAGVDSVLVADVPVEESAPFRQAALRHNVAPIFICPPNADDDLLRQIASYGRGYTYLLSRAGVTGAENRAALPLNHLVTKLKEYNAAPPLQGFGISAPDQVKAAIDAGAAGAISGSAIVKIIEQHINEPEKMLAALKAFVQPMKAATRS.

Catalysis depends on proton acceptor residues E49 and D60.

Belongs to the TrpA family. Tetramer of two alpha and two beta chains.

It carries out the reaction (1S,2R)-1-C-(indol-3-yl)glycerol 3-phosphate + L-serine = D-glyceraldehyde 3-phosphate + L-tryptophan + H2O. Its pathway is amino-acid biosynthesis; L-tryptophan biosynthesis; L-tryptophan from chorismate: step 5/5. Its function is as follows. The alpha subunit is responsible for the aldol cleavage of indoleglycerol phosphate to indole and glyceraldehyde 3-phosphate. The polypeptide is Tryptophan synthase alpha chain (Escherichia coli (strain SMS-3-5 / SECEC)).